Reading from the N-terminus, the 394-residue chain is ATP phosphoribosyltransferase regulatory subunit (394 aa).

It belongs to the class-II aminoacyl-tRNA synthetase family. HisZ subfamily. In terms of assembly, heteromultimer composed of HisG and HisZ subunits.

It localises to the cytoplasm. Its pathway is amino-acid biosynthesis; L-histidine biosynthesis; L-histidine from 5-phospho-alpha-D-ribose 1-diphosphate: step 1/9. Its function is as follows. Required for the first step of histidine biosynthesis. May allow the feedback regulation of ATP phosphoribosyltransferase activity by histidine. This chain is ATP phosphoribosyltransferase regulatory subunit, found in Saccharophagus degradans (strain 2-40 / ATCC 43961 / DSM 17024).